The following is a 713-amino-acid chain: DNA polymerase eta (713 aa).

Residues 9–259 (VALVDMDCFF…MPIRKIRSLG (251 aa)) form the UmuC domain. Mg(2+)-binding residues include aspartate 13 and methionine 14. Mn(2+)-binding residues include aspartate 13 and methionine 14. A 2'-deoxyribonucleoside 5'-triphosphate is bound at residue arginine 61. Aspartate 115 and glutamate 116 together coordinate Mg(2+). Aspartate 115 and glutamate 116 together coordinate Mn(2+). Disordered regions lie at residues 441–472 (TSFLSSDPSSLPKVPVTSSEAKTQGSGPAVTA) and 495–527 (EASLSSLTAPTQAPMSNSPSKPSLPFQTSQSTG). Polar residues-rich tracts occupy residues 456–466 (VTSSEAKTQGS) and 497–527 (SLSSLTAPTQAPMSNSPSKPSLPFQTSQSTG). The segment at 628–662 (AAEDQVPCEKCGSLVPVWDMPEHMDYHFALELQKS) adopts a UBZ3-type zinc-finger fold. Residues cysteine 635, cysteine 638, histidine 650, and histidine 654 each contribute to the Zn(2+) site. The disordered stretch occupies residues 677–705 (VSHQGKRNPKSPLACTNKRPRPEGMQTLE). Residues lysine 682, lysine 686, and lysine 694 each participate in a glycyl lysine isopeptide (Lys-Gly) (interchain with G-Cter in ubiquitin) cross-link. The PIP-box motif lies at 701-708 (MQTLESFF). Residue lysine 709 forms a Glycyl lysine isopeptide (Lys-Gly) (interchain with G-Cter in ubiquitin) linkage.

Belongs to the DNA polymerase type-Y family. In terms of assembly, interacts with REV1. Interacts with monoubiquitinated PCNA, but not unmodified PCNA. Interacts with POLI; this interaction targets POLI to the replication machinery. Interacts with PALB2 and BRCA2; the interactions are direct and are required to sustain the recruitment of POLH at blocked replication forks and to stimulate POLH-dependent DNA synthesis on D loop substrates. Interacts (via C-terminus) with TRAIP. Interacts with ubiquitin. Interacts with POLDIP2. The cofactor is Mg(2+). It depends on Mn(2+) as a cofactor. Post-translationally, monoubiquitinated by RCHY1/PIRH2. Ubiquitination depends on integrity of the UBZ3-type zinc finger domain and is enhanced by TRAIP. Ubiquitination inhibits the ability of PolH to interact with PCNA and to bypass UV-induced lesions.

The protein resides in the nucleus. The enzyme catalyses DNA(n) + a 2'-deoxyribonucleoside 5'-triphosphate = DNA(n+1) + diphosphate. The enzyme in complex with the DNA substrate binds a third divalent metal cation. The binding of this third divalent cation, which is coordinated by water molecules and two oxygen atoms from DNA and dNTP, is essential for catalyzing the DNA synthesis. Functionally, DNA polymerase specifically involved in the DNA repair by translesion synthesis (TLS). Due to low processivity on both damaged and normal DNA, cooperates with the heterotetrameric (REV3L, REV7, POLD2 and POLD3) POLZ complex for complete bypass of DNA lesions. Inserts one or 2 nucleotide(s) opposite the lesion, the primer is further extended by the tetrameric POLZ complex. In the case of 1,2-intrastrand d(GpG)-cisplatin cross-link, inserts dCTP opposite the 3' guanine. Particularly important for the repair of UV-induced pyrimidine dimers. Although inserts the correct base, may cause base transitions and transversions depending upon the context. May play a role in hypermutation at immunoglobulin genes. Forms a Schiff base with 5'-deoxyribose phosphate at abasic sites, but does not have any lyase activity, preventing the release of the 5'-deoxyribose phosphate (5'-dRP) residue. This covalent trapping of the enzyme by the 5'-dRP residue inhibits its DNA synthetic activity during base excision repair, thereby avoiding high incidence of mutagenesis. Targets POLI to replication foci. The sequence is that of DNA polymerase eta (POLH) from Homo sapiens (Human).